The sequence spans 312 residues: MSEVDTIAKQNITRMNKLQKRLRHEVGSAIADYNMIEDGDRVMCCLSGGKDSYTMLDILLTLQQRAPIKFEIVAVNLDQKQPGFPEHVLPAYLDKLGVAYHILEKDTYSIVKEKIPEGKTTCSLCSRLRRGTLYGFAQHIGATKIALGHHRDDIIETMFLNMFYAGKQKAMPPKLLSDDGANMVIRPLAYCREKDIEEYSTLKSFPIIPCNLCGSQENLKRGAVKDMLQMWDKQHPGRIETIFTAMQNTSPSQGVDRENFDFISLKRNPDAVNTGDVADADLPAFDFVDISNNGHINLDISNRIDVVATFKP.

A PP-loop motif motif is present at residues 47 to 52 (SGGKDS). 3 residues coordinate [4Fe-4S] cluster: C122, C125, and C213.

This sequence belongs to the TtcA family. In terms of assembly, homodimer. The cofactor is Mg(2+). It depends on [4Fe-4S] cluster as a cofactor.

The protein resides in the cytoplasm. The catalysed reaction is cytidine(32) in tRNA + S-sulfanyl-L-cysteinyl-[cysteine desulfurase] + AH2 + ATP = 2-thiocytidine(32) in tRNA + L-cysteinyl-[cysteine desulfurase] + A + AMP + diphosphate + H(+). It functions in the pathway tRNA modification. In terms of biological role, catalyzes the ATP-dependent 2-thiolation of cytidine in position 32 of tRNA, to form 2-thiocytidine (s(2)C32). The sulfur atoms are provided by the cysteine/cysteine desulfurase (IscS) system. This Shewanella frigidimarina (strain NCIMB 400) protein is tRNA-cytidine(32) 2-sulfurtransferase.